A 473-amino-acid polypeptide reads, in one-letter code: Photosystem II CP43 reaction center protein (473 aa).

Residues 1–14 (MKTLYSLRRFYHVE) constitute a propeptide that is removed on maturation. Position 15 is an N-acetylthreonine (T15). T15 bears the Phosphothreonine mark. Transmembrane regions (helical) follow at residues 69-93 (LFEV…PHLA), 134-155 (LLGP…KDRN), 178-200 (KALY…RKIT), 255-275 (KPFA…LSYS), and 291-312 (WFNN…ASQA). [CaMn4O5] cluster is bound at residue E367. A helical membrane pass occupies residues 447–471 (RARAAAAGFEKGIDRDFEPVLSMTP).

The protein belongs to the PsbB/PsbC family. PsbC subfamily. As to quaternary structure, PSII is composed of 1 copy each of membrane proteins PsbA, PsbB, PsbC, PsbD, PsbE, PsbF, PsbH, PsbI, PsbJ, PsbK, PsbL, PsbM, PsbT, PsbX, PsbY, PsbZ, Psb30/Ycf12, at least 3 peripheral proteins of the oxygen-evolving complex and a large number of cofactors. It forms dimeric complexes. Binds multiple chlorophylls and provides some of the ligands for the Ca-4Mn-5O cluster of the oxygen-evolving complex. It may also provide a ligand for a Cl- that is required for oxygen evolution. PSII binds additional chlorophylls, carotenoids and specific lipids. serves as cofactor.

Its subcellular location is the plastid. It localises to the chloroplast thylakoid membrane. One of the components of the core complex of photosystem II (PSII). It binds chlorophyll and helps catalyze the primary light-induced photochemical processes of PSII. PSII is a light-driven water:plastoquinone oxidoreductase, using light energy to abstract electrons from H(2)O, generating O(2) and a proton gradient subsequently used for ATP formation. The sequence is that of Photosystem II CP43 reaction center protein from Aethionema cordifolium (Lebanon stonecress).